Reading from the N-terminus, the 309-residue chain is Taste receptor type 2 member 20 (309 aa).

Residues 1–6 (MMSFLH) are Extracellular-facing. The chain crosses the membrane as a helical span at residues 7-27 (IVFSILVVVAFILGNFANGFI). Residues 28–46 (ALINFIAWVKRQKISSADQ) are Cytoplasmic-facing. A helical transmembrane segment spans residues 47-67 (IIAALAVSRVGLLWVILLHWY). Residues 68–79 (STVLNPTSSNLK) lie on the Extracellular side of the membrane. A helical membrane pass occupies residues 80–100 (VIIFISNAWAVTNHFSIWLAT). Topologically, residues 101–125 (SLSIFYLLKIVNFSRLIFHHLKRKA) are cytoplasmic. The helical transmembrane segment at 126 to 146 (KSVVLVIVLGSLFFLVCXLVM) threads the bilayer. Over 147 to 178 (KNTYINVWTEECEGNVTWKIKLRNAMHLSNLT) the chain is Extracellular. The helical transmembrane segment at 179–199 (VAMLANLIPFTLTLISFLLLI) threads the bilayer. The Cytoplasmic portion of the chain corresponds to 200–229 (YSLCKHLKKMQLHGKGSQDPSTKIHIKALQ). Residues 230-250 (TVTSFLILLAIYFLCLITSFW) form a helical membrane-spanning segment. Topologically, residues 251–259 (NSKMRPKEI) are extracellular. A helical membrane pass occupies residues 260 to 280 (VLMLCQAFGIIYPSFHSFILI). The Cytoplasmic portion of the chain corresponds to 281-309 (WGNKTLKQTFLSVLWQVTCWAKGQNQSTP).

It belongs to the G-protein coupled receptor T2R family.

The protein localises to the membrane. Its function is as follows. Receptor that may play a role in the perception of bitterness and is gustducin-linked. May play a role in sensing the chemical composition of the gastrointestinal content. The activity of this receptor may stimulate alpha gustducin, mediate PLC-beta-2 activation and lead to the gating of TRPM5. The protein is Taste receptor type 2 member 20 (TAS2R20) of Pan troglodytes (Chimpanzee).